The primary structure comprises 372 residues: N-methyl-L-tryptophan oxidase (372 aa).

FAD is bound at residue 4-34 (DLIIIGSGSVGAAAGYYATRAGLKVLMTDAH). S-8alpha-FAD cysteine is present on C307.

Belongs to the MSOX/MTOX family. MTOX subfamily. In terms of assembly, monomer. FAD is required as a cofactor.

The catalysed reaction is N(alpha)-methyl-L-tryptophan + O2 + H2O = L-tryptophan + formaldehyde + H2O2. Catalyzes the oxidative demethylation of N-methyl-L-tryptophan. The chain is N-methyl-L-tryptophan oxidase from Salmonella heidelberg (strain SL476).